Here is a 777-residue protein sequence, read N- to C-terminus: Ethylene receptor 4 (777 aa).

3 helical membrane passes run 49–69 (LLIA…ATCA), 77–97 (AVLH…LAAF), and 113–133 (AAKV…LTFI). Cu cation is bound by residues C88 and H92. The region spanning 184 to 344 (DAHAILRTTA…VVADQAAVAL (161 aa)) is the GAF domain. The Histidine kinase domain occupies 387 to 521 (AMCHAMRRPV…NTGSGACRLS (135 aa)). Phosphohistidine; by autocatalysis is present on H390. A Response regulatory domain is found at 645–774 (RVLLADDDAM…ALGAQLCRVL (130 aa)). Position 696 is a 4-aspartylphosphate (D696).

Belongs to the ethylene receptor family. Cu cation is required as a cofactor.

The protein localises to the endoplasmic reticulum membrane. The catalysed reaction is ATP + protein L-histidine = ADP + protein N-phospho-L-histidine.. Ethylene receptor related to bacterial two-component regulators. Acts as a redundant negative regulator of ethylene signaling. This is Ethylene receptor 4 (ETR4) from Oryza sativa subsp. japonica (Rice).